Consider the following 510-residue polypeptide: Bifunctional purine biosynthesis protein PurH (510 aa).

The 145-residue stretch at 1–145 (MTKRALLSVS…KNFAAVLPIV (145 aa)) folds into the MGS-like domain.

The protein belongs to the PurH family.

It carries out the reaction (6R)-10-formyltetrahydrofolate + 5-amino-1-(5-phospho-beta-D-ribosyl)imidazole-4-carboxamide = 5-formamido-1-(5-phospho-D-ribosyl)imidazole-4-carboxamide + (6S)-5,6,7,8-tetrahydrofolate. It catalyses the reaction IMP + H2O = 5-formamido-1-(5-phospho-D-ribosyl)imidazole-4-carboxamide. Its pathway is purine metabolism; IMP biosynthesis via de novo pathway; 5-formamido-1-(5-phospho-D-ribosyl)imidazole-4-carboxamide from 5-amino-1-(5-phospho-D-ribosyl)imidazole-4-carboxamide (10-formyl THF route): step 1/1. The protein operates within purine metabolism; IMP biosynthesis via de novo pathway; IMP from 5-formamido-1-(5-phospho-D-ribosyl)imidazole-4-carboxamide: step 1/1. In Lactiplantibacillus plantarum (strain ATCC BAA-793 / NCIMB 8826 / WCFS1) (Lactobacillus plantarum), this protein is Bifunctional purine biosynthesis protein PurH.